A 391-amino-acid chain; its full sequence is Protein CapJ (391 aa).

It functions in the pathway capsule biogenesis; capsule polysaccharide biosynthesis. In terms of biological role, required for the biosynthesis of type 1 capsular polysaccharide. This Staphylococcus aureus protein is Protein CapJ (capJ).